Reading from the N-terminus, the 303-residue chain is Growth/differentiation factor 15 (303 aa).

The first 30 residues, 1–30 (MALRALHAQPTGGPQLRFLLFLLLLLLLLS), serve as a signal peptide directing secretion. Residues 31-188 (WPSQGDALAL…LRSAAGRGRR (158 aa)) constitute a propeptide that is removed on maturation. A glycan (N-linked (GlcNAc...) asparagine) is linked at Asn71. 4 cysteine pairs are disulfide-bonded: Cys198–Cys205, Cys206–Cys269, Cys235–Cys300, and Cys239–Cys302.

It belongs to the TGF-beta family. As to quaternary structure, homodimer; disulfide-linked. Interacts with GFRAL and RET; ligand of GFRAL, which mediates GDF15 internalization and cellular signaling through interaction with RET via the formation of a 2:2:2 ternary complex composed of GDF15, GFRAL and RET. In terms of tissue distribution, detected in plasma (at protein level).

The protein localises to the secreted. In terms of biological role, hormone produced in response to various stresses to confer information about those stresses to the brain, and trigger an aversive response, characterized by nausea and/or loss of appetite. The aversive response is both required to reduce continuing exposure to those stresses at the time of exposure and to promote avoidance behavior in the future. Acts by binding to its receptor, GFRAL, activating GFRAL-expressing neurons localized in the area postrema and nucleus tractus solitarius of the brainstem. It then triggers the activation of neurons localized within the parabrachial nucleus and central amygdala, which constitutes part of the 'emergency circuit' that shapes responses to stressful conditions. The GDF15-GFRAL signal induces expression of genes involved in metabolism, such as lipid metabolism in adipose tissues. Contributes to the effect of metformin, an anti-diabetic drug, on appetite reduction and weight loss: produced in the kidney in response to metformin treatment, thereby activating the GDF15-GFRAL response, leading to reduced appetite and weight. Required for avoidance behavior in response to food allergens: induced downstream of mast cell activation to promote aversion and minimize harmful effects of exposure to noxious substances. Produced in response to anticancer drugs, such as camptothecin or cisplatin, promoting nausea and contributing to malnutrition. Overproduced in many cancers, promoting anorexia in cancer (cachexia). Responsible for the risk of nausea during pregnancy: high levels of GDF15 during pregnancy, mostly originating from embryos, are associated with increased nausea. Maternal sensitivity to nausea is probably determined by pre-pregnancy exposure to GDF15, females with naturally high level of GDF15 being less susceptible to nausea than female rats with low levels of GDF15 before pregnancy. Promotes metabolic adaptation in response to systemic inflammation caused by bacterial and viral infections in order to promote tissue tolerance and prevent tissue damage. Required for tissue tolerance in response to myocardial infarction by acting as an inhibitor of leukocyte integring activation, thereby protecting against cardiac rupture. Inhibits growth hormone signaling on hepatocytes. The sequence is that of Growth/differentiation factor 15 from Rattus norvegicus (Rat).